The sequence spans 353 residues: Melatonin receptor type 1A (353 aa).

The disordered stretch occupies residues 1-26; that stretch reads MRANGSELNGTVLPRDPPAEGSPRRP. The Extracellular portion of the chain corresponds to 1–32; sequence MRANGSELNGTVLPRDPPAEGSPRRPPWVTST. N-linked (GlcNAc...) asparagine glycosylation is found at Asn-4 and Asn-9. A helical membrane pass occupies residues 33–53; it reads LATILIFTIVVDLLGNLLVIL. The Cytoplasmic portion of the chain corresponds to 54 to 66; the sequence is SVYRNKKLRNAGN. A helical transmembrane segment spans residues 67–87; the sequence is IFVVSLAIADLVVAIYPYPLV. At 88–105 the chain is on the extracellular side; that stretch reads LTSVFHNGWNLGYLHCQI. Cys-103 and Cys-180 are disulfide-bonded. The chain crosses the membrane as a helical span at residues 106-126; the sequence is SGFLMGLSVIGSIFNITGIAI. The Cytoplasmic segment spans residues 127–145; the sequence is NRYCYICHSLKYDKLYSDK. Residues 146–166 form a helical membrane-spanning segment; it reads NSLCYVGLIWVLTVVAIVPNL. Over 167-190 the chain is Extracellular; sequence FVGSLQYDPRIYSCTFAQSVSSAY. The helical transmembrane segment at 191 to 211 threads the bilayer; sequence TIAVVFFHFILPIAIVTYCYL. Over 212–243 the chain is Cytoplasmic; that stretch reads RIWILVIQVRRRVKPDNNPRLKPHDFRNFVTM. A helical membrane pass occupies residues 244 to 264; sequence FVVFVLFAVCWAPLNFIGLAV. The Extracellular segment spans residues 265 to 277; sequence AVDPETIIPRIPE. A helical transmembrane segment spans residues 278-298; it reads WLFVSSYYMAYFNSCLNAIIY. Residues 299-353 are Cytoplasmic-facing; that stretch reads GLLNQNFRREYKKIVVSFCTAKAFFQDSSNDAADRIRSKPSPLITNNNQVKVDSV.

This sequence belongs to the G-protein coupled receptor 1 family. Expressed in optic tectum and retina, less in neostriatum, hypothalamus and thalamus.

The protein resides in the cell membrane. High affinity receptor for melatonin. The activity of this receptor is mediated by pertussis toxin sensitive G proteins that inhibits adenylate cyclase activity. This is Melatonin receptor type 1A from Gallus gallus (Chicken).